A 454-amino-acid polypeptide reads, in one-letter code: Epoxide hydrolase 1 (454 aa).

A helical transmembrane segment spans residues 1–21 (MWLEILLASVLGFVIYWFVSK). Over 22 to 454 (DKEETLLLGD…RKFMGLLEQQ (433 aa)) the chain is Cytoplasmic. Asp226 serves as the catalytic Nucleophile. A Dimethylated arginine modification is found at Arg294. Tyr373 acts as the Proton donor in catalysis. His430 (proton acceptor) is an active-site residue.

This sequence belongs to the peptidase S33 family.

It is found in the microsome membrane. Its subcellular location is the endoplasmic reticulum membrane. It carries out the reaction cis-stilbene oxide + H2O = (1R,2R)-hydrobenzoin. The catalysed reaction is 1-(4-methoxyphenyl)-N-methyl-N-[(3-methyloxetan-3-yl)methyl]methanamine + H2O = 2-{[(4-methoxybenzyl)(methyl)amino]methyl}-2-methylpropane-1,3-diol. It catalyses the reaction 8,9-epoxy-(5Z,11Z,14Z)-eicosatrienoate + H2O = 8,9-dihydroxy-(5Z,11Z,14Z)-eicosatrienoate. The enzyme catalyses 11,12-epoxy-(5Z,8Z,14Z)-eicosatrienoate + H2O = 11,12-dihydroxy-(5Z,8Z,14Z)-eicosatrienoate. It carries out the reaction 2-(5Z,8Z,11Z,14Z-eicosatetraenoyl)-glycerol + H2O = glycerol + (5Z,8Z,11Z,14Z)-eicosatetraenoate + H(+). With respect to regulation, inhibited by 10-hydroxystearamide and methoxy-arachidonyl fluorophosphate. Functionally, biotransformation enzyme that catalyzes the hydrolysis of arene and aliphatic epoxides to less reactive and more water soluble dihydrodiols by the trans addition of water. May play a role in the metabolism of endogenous lipids such as epoxide-containing fatty acids. Metabolizes the abundant endocannabinoid 2-arachidonoylglycerol (2-AG) to free arachidonic acid (AA) and glycerol. Binds 20(S)-hydroxycholesterol (20(S)-OHC). This chain is Epoxide hydrolase 1 (EPHX1), found in Sus scrofa (Pig).